The sequence spans 521 residues: Colicin-E1* (521 aa).

Disordered stretches follow at residues 26–52 (NGNP…AAIH) and 127–163 (SGCA…EKEQ). Positions 30-42 (DGSGSGGGGGTGG) are enriched in gly residues. Positions 133-145 (KQKKKPVKKRKRA) are enriched in basic residues. Basic and acidic residues predominate over residues 146 to 163 (EKSFQEAEQRRKEIEKEQ). 2 helical membrane-spanning segments follow: residues 470 to 486 (AVDA…FSVL) and 493 to 509 (IWGI…FIDK).

Belongs to the channel forming colicin family.

The protein localises to the cell membrane. This colicin is a channel-forming colicin. This class of transmembrane toxins depolarize the cytoplasmic membrane, leading to dissipation of cellular energy. Its function is as follows. Colicins are polypeptide toxins produced by and active against E.coli and closely related bacteria. The chain is Colicin-E1* (cea) from Shigella sonnei.